The primary structure comprises 546 residues: Phosphomethylpyrimidine synthase (546 aa).

Substrate is bound by residues asparagine 145, methionine 174, tyrosine 203, histidine 239, 259 to 261 (SRG), 300 to 303 (DGLR), and glutamate 339. Zn(2+) is bound at residue histidine 343. Position 366 (tyrosine 366) interacts with substrate. Zn(2+) is bound at residue histidine 407. Cysteine 487, cysteine 490, and cysteine 495 together coordinate [4Fe-4S] cluster.

This sequence belongs to the ThiC family. It depends on [4Fe-4S] cluster as a cofactor.

It carries out the reaction 5-amino-1-(5-phospho-beta-D-ribosyl)imidazole + S-adenosyl-L-methionine = 4-amino-2-methyl-5-(phosphooxymethyl)pyrimidine + CO + 5'-deoxyadenosine + formate + L-methionine + 3 H(+). The protein operates within cofactor biosynthesis; thiamine diphosphate biosynthesis. Its function is as follows. Catalyzes the synthesis of the hydroxymethylpyrimidine phosphate (HMP-P) moiety of thiamine from aminoimidazole ribotide (AIR) in a radical S-adenosyl-L-methionine (SAM)-dependent reaction. This Mycobacterium ulcerans (strain Agy99) protein is Phosphomethylpyrimidine synthase.